Here is a 223-residue protein sequence, read N- to C-terminus: MKFFIDSADVEEIRKAHAMGCVDGVTTNPSLLAKVGRGLEETIREICSIVDGPISAECVSMEADELIKEGRSLAKIHDNVVVKIPMGVEGMKATKALTAEGIRTNVTLCFSANQALLCAKAGATYVSPFVGRLDDISQDGMELISHILEIYRNYEHFNTQVLVASVRNPVHVLQAARLGADVATLPYNVITQLANHPLTDAGIKKFLADWEKVPKAAKPPAAK.

Residue lysine 83 is the Schiff-base intermediate with substrate of the active site.

It belongs to the transaldolase family. Type 3B subfamily.

The protein localises to the cytoplasm. It catalyses the reaction D-sedoheptulose 7-phosphate + D-glyceraldehyde 3-phosphate = D-erythrose 4-phosphate + beta-D-fructose 6-phosphate. Its pathway is carbohydrate degradation; pentose phosphate pathway; D-glyceraldehyde 3-phosphate and beta-D-fructose 6-phosphate from D-ribose 5-phosphate and D-xylulose 5-phosphate (non-oxidative stage): step 2/3. Transaldolase is important for the balance of metabolites in the pentose-phosphate pathway. The protein is Probable transaldolase of Myxococcus xanthus (strain DK1622).